Consider the following 234-residue polypeptide: 1-(5-phosphoribosyl)-5-[(5-phosphoribosylamino)methylideneamino] imidazole-4-carboxamide isomerase (234 aa).

The active-site Proton acceptor is Asp9. Residue Asp131 is the Proton donor of the active site.

Belongs to the HisA/HisF family.

Its subcellular location is the cytoplasm. It carries out the reaction 1-(5-phospho-beta-D-ribosyl)-5-[(5-phospho-beta-D-ribosylamino)methylideneamino]imidazole-4-carboxamide = 5-[(5-phospho-1-deoxy-D-ribulos-1-ylimino)methylamino]-1-(5-phospho-beta-D-ribosyl)imidazole-4-carboxamide. The protein operates within amino-acid biosynthesis; L-histidine biosynthesis; L-histidine from 5-phospho-alpha-D-ribose 1-diphosphate: step 4/9. The chain is 1-(5-phosphoribosyl)-5-[(5-phosphoribosylamino)methylideneamino] imidazole-4-carboxamide isomerase from Staphylococcus aureus (strain bovine RF122 / ET3-1).